We begin with the raw amino-acid sequence, 503 residues long: ATP synthase subunit alpha (503 aa).

Residue 169–176 (GDRKTGKT) participates in ATP binding.

The protein belongs to the ATPase alpha/beta chains family. As to quaternary structure, F-type ATPases have 2 components, CF(1) - the catalytic core - and CF(0) - the membrane proton channel. CF(1) has five subunits: alpha(3), beta(3), gamma(1), delta(1), epsilon(1). CF(0) has three main subunits: a(1), b(2) and c(9-12). The alpha and beta chains form an alternating ring which encloses part of the gamma chain. CF(1) is attached to CF(0) by a central stalk formed by the gamma and epsilon chains, while a peripheral stalk is formed by the delta and b chains.

Its subcellular location is the cell membrane. It carries out the reaction ATP + H2O + 4 H(+)(in) = ADP + phosphate + 5 H(+)(out). Functionally, produces ATP from ADP in the presence of a proton gradient across the membrane. The alpha chain is a regulatory subunit. This Lactobacillus johnsonii (strain CNCM I-12250 / La1 / NCC 533) protein is ATP synthase subunit alpha.